The primary structure comprises 464 residues: Glutathione reductase (464 aa).

The FAD site is built by Ser17 and Gly18. Residue Ser17 coordinates glutathione. Arg24 contributes to the glutathione binding site. Residues Glu37, Thr45, Cys46, and Lys54 each coordinate FAD. Cys46 and Cys51 are joined by a disulfide. Tyr103 is a glutathione binding site. Ala119 is a binding site for FAD. The NADP(+) site is built by Ala186, Ile189, Glu192, Arg209, Arg215, and Gly274. Asp315 is a binding site for FAD. An NADP(+)-binding site is contributed by Glu321. Thr323 provides a ligand contact to FAD. Residue Arg331 participates in glutathione binding. Val354 lines the NADP(+) pocket. His453 provides a ligand contact to FAD. Catalysis depends on His453, which acts as the Proton acceptor.

Belongs to the class-I pyridine nucleotide-disulfide oxidoreductase family. In terms of assembly, homodimer. The cofactor is FAD.

Its subcellular location is the cytoplasm. It localises to the mitochondrion. The catalysed reaction is 2 glutathione + NADP(+) = glutathione disulfide + NADPH + H(+). Its function is as follows. Catalyzes the reduction of glutathione disulfide (GSSG) to reduced glutathione (GSH). Constitutes the major mechanism to maintain a high GSH:GSSG ratio in the cytosol. The chain is Glutathione reductase (pgr1) from Schizosaccharomyces pombe (strain 972 / ATCC 24843) (Fission yeast).